Here is a 98-residue protein sequence, read N- to C-terminus: NADH-ubiquinone oxidoreductase chain 4L (98 aa).

The next 3 membrane-spanning stretches (helical) occupy residues 1 to 21 (MPLI…GMLV), 29 to 49 (SLLC…LMTL), and 58 to 78 (IVPI…LALL).

Belongs to the complex I subunit 4L family. In terms of assembly, core subunit of respiratory chain NADH dehydrogenase (Complex I) which is composed of 45 different subunits.

It localises to the mitochondrion inner membrane. The catalysed reaction is a ubiquinone + NADH + 5 H(+)(in) = a ubiquinol + NAD(+) + 4 H(+)(out). Core subunit of the mitochondrial membrane respiratory chain NADH dehydrogenase (Complex I) which catalyzes electron transfer from NADH through the respiratory chain, using ubiquinone as an electron acceptor. Part of the enzyme membrane arm which is embedded in the lipid bilayer and involved in proton translocation. This Pan paniscus (Pygmy chimpanzee) protein is NADH-ubiquinone oxidoreductase chain 4L (MT-ND4L).